The chain runs to 399 residues: Na(+)/H(+) antiporter NhaA (399 aa).

11 helical membrane passes run 14–34 (AGGI…NSPL), 59–79 (LIHW…GLEV), 95–115 (SLPT…YLLF), 124–144 (AGWA…MALL), 154–174 (VFLL…IAMF), 177–197 (TDLS…LVGL), 213–233 (LILW…GVII), 261–281 (FIIL…PMSF), 290–310 (VGIA…FSYI), 331–351 (VALM…LAFV), and 363–383 (LGIL…LAKV).

The protein belongs to the NhaA Na(+)/H(+) (TC 2.A.33) antiporter family.

Its subcellular location is the cell inner membrane. The catalysed reaction is Na(+)(in) + 2 H(+)(out) = Na(+)(out) + 2 H(+)(in). Na(+)/H(+) antiporter that extrudes sodium in exchange for external protons. This Shewanella sediminis (strain HAW-EB3) protein is Na(+)/H(+) antiporter NhaA.